Reading from the N-terminus, the 704-residue chain is Polyribonucleotide nucleotidyltransferase (704 aa).

Residues Asp-487 and Asp-493 each contribute to the Mg(2+) site. Positions 554-613 constitute a KH domain; that stretch reads PRLLTIKIHPDKIREVIGKGGSTIQAITKETGTQIDIQDDGTIIIASVNAIAAQAAKSRI. Positions 623 to 691 constitute an S1 motif domain; it reads GRIYEGKVAK…KQGRIRLSIK (69 aa).

Belongs to the polyribonucleotide nucleotidyltransferase family. Component of the RNA degradosome, which is a multiprotein complex involved in RNA processing and mRNA degradation. The cofactor is Mg(2+).

Its subcellular location is the cytoplasm. It carries out the reaction RNA(n+1) + phosphate = RNA(n) + a ribonucleoside 5'-diphosphate. In terms of biological role, involved in mRNA degradation. Catalyzes the phosphorolysis of single-stranded polyribonucleotides processively in the 3'- to 5'-direction. The sequence is that of Polyribonucleotide nucleotidyltransferase from Xanthomonas campestris pv. campestris (strain 8004).